A 262-amino-acid polypeptide reads, in one-letter code: Shikimate dehydrogenase (NADP(+)) (262 aa).

Residues 15–17 (SRS) and T62 each bind shikimate. K66 (proton acceptor) is an active-site residue. NADP(+) is bound at residue E78. Shikimate is bound by residues N87 and D102. NADP(+) contacts are provided by residues 126 to 130 (GAGGA), 150 to 155 (NRTQQR), and M214. Position 216 (Y216) interacts with shikimate. Position 236 (G236) interacts with NADP(+).

This sequence belongs to the shikimate dehydrogenase family. As to quaternary structure, homodimer.

The catalysed reaction is shikimate + NADP(+) = 3-dehydroshikimate + NADPH + H(+). It participates in metabolic intermediate biosynthesis; chorismate biosynthesis; chorismate from D-erythrose 4-phosphate and phosphoenolpyruvate: step 4/7. In terms of biological role, involved in the biosynthesis of the chorismate, which leads to the biosynthesis of aromatic amino acids. Catalyzes the reversible NADPH linked reduction of 3-dehydroshikimate (DHSA) to yield shikimate (SA). The protein is Shikimate dehydrogenase (NADP(+)) of Acinetobacter baylyi (strain ATCC 33305 / BD413 / ADP1).